Here is a 174-residue protein sequence, read N- to C-terminus: Tat proofreading chaperone TtrD (174 aa).

The protein belongs to the TorD/DmsD family. As to quaternary structure, monomer.

The protein resides in the cytoplasm. Functionally, binds specifically to the Tat signal peptide of the TtrA subunit of the tetrathionate reductase. The protein is Tat proofreading chaperone TtrD (ttrD) of Archaeoglobus fulgidus (strain ATCC 49558 / DSM 4304 / JCM 9628 / NBRC 100126 / VC-16).